We begin with the raw amino-acid sequence, 167 residues long: Fimbrial adapter PapF (167 aa).

The first 18 residues, 1 to 18 (MIRLSLFISLLLTSVAVL), serve as a signal peptide directing secretion.

The protein localises to the secreted. It localises to the fimbrium. Its function is as follows. Adapter that links the PapG adhesin to the distal end of the tip fibrillum. PapF is required for the correct presentation of the adhesin at the distal end of the tip fibrillum. Pili are polar filaments radiating from the surface of the bacterium to a length of 0.5-1.5 micrometers and numbering 100-300 per cell, and enable bacteria to colonize the epithelium of specific host organs. In Escherichia coli, this protein is Fimbrial adapter PapF (papF).